Reading from the N-terminus, the 370-residue chain is Ubiquinone biosynthesis O-methyltransferase, mitochondrial (370 aa).

The N-terminal 86 residues, 1 to 86 (MWRGGRLGSR…TYRTPWKRLY (86 aa)), are a transit peptide targeting the mitochondrion. Arg-125 contributes to the S-adenosyl-L-methionine binding site. Lys-144 and Lys-150 each carry N6-acetyllysine. Residues Gly-155 and Asp-176 each contribute to the S-adenosyl-L-methionine site. An N6-acetyllysine modification is found at Lys-197. Ser-223 provides a ligand contact to S-adenosyl-L-methionine. The Mg(2+) site is built by Glu-224, Glu-227, and His-228. The interval 336-370 (AQEHQEPAESALKGETGALHANTSGSPSVREEQRT) is disordered.

The protein belongs to the class I-like SAM-binding methyltransferase superfamily. UbiG/COQ3 family. As to quaternary structure, component of a multi-subunit COQ enzyme complex, composed of at least COQ3, COQ4, COQ5, COQ6, COQ7 and COQ9. Mg(2+) is required as a cofactor.

The protein resides in the mitochondrion inner membrane. It catalyses the reaction 3,4-dihydroxy-5-(all-trans-decaprenyl)benzoate + S-adenosyl-L-methionine = 4-hydroxy-3-methoxy-5-(all-trans-decaprenyl)benzoate + S-adenosyl-L-homocysteine + H(+). It carries out the reaction a 3-demethylubiquinone + S-adenosyl-L-methionine = a ubiquinone + S-adenosyl-L-homocysteine. The enzyme catalyses 3-demethylubiquinol-10 + S-adenosyl-L-methionine = ubiquinol-10 + S-adenosyl-L-homocysteine + H(+). The protein operates within cofactor biosynthesis; ubiquinone biosynthesis. In terms of biological role, O-methyltransferase required for two non-consecutive steps during ubiquinone biosynthesis. Catalyzes the 2 O-methylation of 3,4-dihydroxy-5-(all-trans-decaprenyl)benzoic acid into 4-hydroxy-3-methoxy-5-(all-trans-decaprenyl)benzoic acid. Also catalyzes the last step of ubiquinone biosynthesis by mediating methylation of 3-demethylubiquinone into ubiquinone. Also able to mediate the methylation of 3-demethylubiquinol-10 into ubiquinol-10. This is Ubiquinone biosynthesis O-methyltransferase, mitochondrial from Mus musculus (Mouse).